A 152-amino-acid polypeptide reads, in one-letter code: Transcriptional repressor NrdR (152 aa).

Residues 3 to 34 (CPSCQHNGTRVLDSRPVDDGKSIRRRRECESC) fold into a zinc finger. The ATP-cone domain maps to 49–139 (LIVVKKEGVR…VYRQFKDINV (91 aa)).

This sequence belongs to the NrdR family. Zn(2+) is required as a cofactor.

Functionally, negatively regulates transcription of bacterial ribonucleotide reductase nrd genes and operons by binding to NrdR-boxes. The protein is Transcriptional repressor NrdR of Bacillus subtilis (strain 168).